Reading from the N-terminus, the 690-residue chain is Subtilisin-like protease 1 (690 aa).

Residues 1–25 form the signal peptide; sequence MMLNKKVVALCTLTLHLFCIFLCLG. A propeptide spans 26 to 219 (inhibition peptide); it reads KEVRSEENGK…IESDKLVSAD (194 aa). A disordered region spans residues 99 to 131; it reads EKNKNDNHNNNNNNNNISSSSSSSSNTFGEEKE. Residues 106 to 124 are compositionally biased toward low complexity; that stretch reads HNNNNNNNNISSSSSSSSN. N114 carries an N-linked (GlcNAc...) asparagine glycan. Ca(2+) is bound by residues N147, T150, and P152. N-linked (GlcNAc...) asparagine glycosylation occurs at N173. G207 serves as a coordination point for Ca(2+). N263 carries N-linked (GlcNAc...) asparagine glycosylation. Disordered regions lie at residues 266-286 and 305-334; these read HAAT…DTFS and NNNN…RPGK. A compositionally biased stretch (low complexity) spans 305 to 330; sequence NNNNYYYSHSSNGHNSSSRNSSSSRS. N-linked (GlcNAc...) asparagine glycosylation is found at N319 and N324. E340 lines the Ca(2+) pocket. Residues 345 to 663 form the Peptidase S8 domain; it reads QWGLDLSRLD…AGYADINKAV (319 aa). Cystine bridges form between C371–C481 and C460–C477. D374 acts as the Charge relay system in catalysis. Ca(2+) is bound by residues D383, E394, R398, F401, D402, D403, D404, N406, I408, D410, and D411. An N-linked (GlcNAc...) asparagine glycan is attached at N419. The active-site Charge relay system is the H430. Ca(2+)-binding residues include I441, N444, I446, and V448. N490, N503, and N522 each carry an N-linked (GlcNAc...) asparagine glycan. A disulfide bond links C523 and C536. N605 carries an N-linked (GlcNAc...) asparagine glycan. The active-site Charge relay system is S608. The N-linked (GlcNAc...) asparagine glycan is linked to N677.

Belongs to the peptidase S8 family. Heterodimer between p54 form and prodomain p31; the interaction inhibits p54 catalytic activity. Heterodimer p31-p54 is monomeric at basic pH and dimeric at acidic pH; dimerization is driven by the N-terminal prodomain (p31). It depends on Ca(2+) as a cofactor. Post-translationally, the prodomain (p31) is cleaved, probably by autocatalysis, during the transport to or in the Golgi apparatus, and remains non-covalently associated with the p54 form as an inhibitor. p54 is further cleaved into the p47 form. This cleavage is likely occurring in the exoneme prior to egress and is mediated by PMX/plasmepsin X. The p54-to-p47 conversion can be also autocatalytic. Heterodimer p31-p54 is activated by cleavage of prodomain (p31) by the aspartic protease PMX; cleavage by PMX abolishes inhibitory capacity of p31. Primary autocatalytic processing of SUB1 is essential for parasite growth; the p54-to-p47 conversion is dispensable for SUB1 functions in the parasites. The disulfide bond between Cys-523 and Cys-536 acts as a redox-sensitive disulfide switch. The oxidized form is required for catalytic activity. In terms of processing, the relevance of N-glycosylation is not clear. In an insect expression system, SUB1 glycosylation appears to affect its processing into the active mature form suggesting that SUB1 may not be N-glycosylated in parasites.

The protein resides in the secreted. Its subcellular location is the parasitophorous vacuole lumen. The enzyme catalyses Hydrolysis of proteins with broad specificity for peptide bonds, and a preference for a large uncharged residue in P1. Hydrolyzes peptide amides.. With respect to regulation, p54 and probably p47 forms are inhibited by the non-covalent interaction with the cleaved propeptide. Inhibited by subtilisin propeptide-like protein SUB1-ProM. Inhibited by 3,4-dichloroisocoumarin (DCI) and 4-(hydroxymercuri)benzoic acid (pHMB). Partially inhibited by chymostatin, leupeptin, phenylmethylsulfonyl fluoride (PMSF), and 4-(2-aminoethyl)benzenesulfonyl fluoride. Functionally, serine protease which plays an essential role in merozoite invasion of and egress from host erythrocytes by processing and activating various merozoite surface and parasitophorous vacuole proteins. Mediates the proteolytic maturation of serine proteases SERA4, SERA5 and SERA6 just prior to merozoite egress. Prior to merozoite egress, cleaves merozoite surface proteins MSP1, MSP6 and MSP7, which form the MSP1/6/7 complex, and thereby may prime the parasite cell surface for invasion of fresh erythrocytes. Prior to merozoite egress, cleaves MSRP2 converting it to MSRP2 p25 form, and RAP1 converting it to RAP1 p67 form. This chain is Subtilisin-like protease 1, found in Plasmodium falciparum.